Reading from the N-terminus, the 77-residue chain is MKLTCVLIVAVLILTACQLIAADDSRDLKRFSRRKMRDGMLNTKNMKRQCLPPLSLCTMDDDECCDDCXLFLCLVTS.

The signal sequence occupies residues Met1–Ala22. Positions Asp23–Met46 are excised as a propeptide. At Gln49 the chain carries Pyrrolidone carboxylic acid. Disulfide bonds link Cys50-Cys65, Cys57-Cys68, and Cys64-Cys73.

This sequence belongs to the conotoxin O1 superfamily. Expressed by the venom duct.

The protein localises to the secreted. This Conus arenatus (Sand-dusted cone) protein is Conotoxin ArMKLT2-0251.